Reading from the N-terminus, the 345-residue chain is Diacylglycerol O-acyltransferase 1 (345 aa).

Over 1–49 (MSEETSIPGIIASTPPISKDSRRNVSHWLQALAVFLHSVSLTLTASWYT) the chain is Cytoplasmic. The helical transmembrane segment at 50-70 (VLWAFLPFWPFLIVYLIWLIY) threads the bilayer. Over 71 to 113 (DDGFVTGKDRQKRWLRNAPPYRWFCHYFPIRLHKTTELDSEKN) the chain is Lumenal. A helical transmembrane segment spans residues 114-134 (YIFGYHPHGIISLGAFGGFAS). The Cytoplasmic portion of the chain corresponds to 135-141 (EGADFSK). Residues 142–162 (LFPGINVSVLTLNSNFYVPVY) traverse the membrane as a helical segment. At 163–216 (RDYLMALNINSVSKKSCVSILSRKPGDSVLIVIGGAQESLLSRPGQNNLVLKKR) the chain is on the lumenal side. The chain crosses the membrane as a helical span at residues 217 to 237 (FGFVKLAFLTGSSLVPCFAFG). Topologically, residues 238–345 (ESDIFEQVDN…NRISELKLSA (108 aa)) are cytoplasmic.

It belongs to the diacylglycerol acyltransferase family.

It is found in the lipid droplet. It localises to the endoplasmic reticulum membrane. It carries out the reaction an acyl-CoA + a 1,2-diacyl-sn-glycerol = a triacyl-sn-glycerol + CoA. The catalysed reaction is a 2-acylglycerol + an acyl-CoA = a 1,2-diacyl-sn-glycerol + CoA. It functions in the pathway glycerolipid metabolism; triacylglycerol biosynthesis. Catalyzes the terminal and only committed step in triacylglycerol (TAG) synthesis by using diacylglycerol (DAG) and fatty acyl-CoA as substrates. Required for storage lipid synthesis. Major DAG esterifying enzyme in stationary phase when TAG production is particularly active. Involved in lipid particle synthesis from the endoplasmic reticulum, promoting localized TAG production at discrete ER subdomains. This is Diacylglycerol O-acyltransferase 1 (dga1) from Schizosaccharomyces pombe (strain 972 / ATCC 24843) (Fission yeast).